A 498-amino-acid polypeptide reads, in one-letter code: 3-octaprenyl-4-hydroxybenzoate carboxy-lyase (498 aa).

N175 serves as a coordination point for Mn(2+). Prenylated FMN-binding positions include 178 to 180 (IYR), 192 to 194 (RWL), and 197 to 198 (RG). Position 241 (E241) interacts with Mn(2+). The active-site Proton donor is the D290.

It belongs to the UbiD family. Homohexamer. It depends on prenylated FMN as a cofactor. Mn(2+) is required as a cofactor.

The protein localises to the cell membrane. It catalyses the reaction a 4-hydroxy-3-(all-trans-polyprenyl)benzoate + H(+) = a 2-(all-trans-polyprenyl)phenol + CO2. It functions in the pathway cofactor biosynthesis; ubiquinone biosynthesis. Functionally, catalyzes the decarboxylation of 3-octaprenyl-4-hydroxy benzoate to 2-octaprenylphenol, an intermediate step in ubiquinone biosynthesis. This Yersinia pseudotuberculosis serotype I (strain IP32953) protein is 3-octaprenyl-4-hydroxybenzoate carboxy-lyase.